A 573-amino-acid chain; its full sequence is Heat shock protein 60A (573 aa).

The N-terminal 57 residues, 1-57, are a transit peptide targeting the mitochondrion; sequence MFRLPVSLARSSISRQLAMRGYAKDVRFGPEVRAMMLQGVDVLADAVAVTMGPKGRN.

This sequence belongs to the chaperonin (HSP60) family.

It localises to the mitochondrion matrix. Its function is as follows. Prevents misfolding and promotes the refolding and proper assembly of unfolded polypeptides generated under stress conditions. This is Heat shock protein 60A from Drosophila melanogaster (Fruit fly).